We begin with the raw amino-acid sequence, 260 residues long: O-antigen export system permease protein RfbA (260 aa).

7 consecutive transmembrane segments (helical) span residues 31–51 (FLGFLWTFLNPTLHMLVYVLL), 63–83 (FPFFMFVGLLPWIWFSTSVGG), 109–129 (VVVTNLCNFVLSLPLMLVLGM), 139–159 (VVLFPVVVLIQLTFTLALTYI), 173–193 (IVSNLLTLWFFATPVLYPLST), 201–221 (SLMLALNPMVSLMTSYQAIFY), and 229–249 (EPLMALAAVSVVLLWAASSIF). Residues 32–252 (LGFLWTFLNP…WAASSIFESR (221 aa)) form the ABC transmembrane type-2 domain.

Belongs to the ABC-2 integral membrane protein family.

It localises to the cell inner membrane. May form an ATP-driven O-antigen export apparatus, in association with RfbB. The protein is O-antigen export system permease protein RfbA (rfbA) of Myxococcus xanthus.